The sequence spans 782 residues: Coiled-coil alpha-helical rod protein 1 (782 aa).

Composition is skewed to basic and acidic residues over residues 62 to 74 (ERDVSSDRQEPGR) and 208 to 218 (ETRRAGEAKEL). Disordered stretches follow at residues 62–82 (ERDVSSDRQEPGRRGRSWGLE) and 177–218 (EQLS…AKEL). Coiled coils occupy residues 82-314 (EGSQ…ELTR), 344-437 (LMVQ…NAVS), and 498-691 (VADV…QQEG).

The protein localises to the cytoplasm. The protein resides in the nucleus. Functionally, may be a regulator of keratinocyte proliferation or differentiation. The sequence is that of Coiled-coil alpha-helical rod protein 1 (CCHCR1) from Pan troglodytes (Chimpanzee).